Consider the following 130-residue polypeptide: Organic solute transporter subunit beta (130 aa).

Residues Met1–Pro35 lie on the Extracellular side of the membrane. Residues Trp36–Gly56 traverse the membrane as a helical segment. At Arg57 to Ser130 the chain is on the cytoplasmic side. The disordered stretch occupies residues Leu99 to Ser130. A compositionally biased stretch (basic and acidic residues) spans Met110 to Asp124.

This sequence belongs to the OST-beta family. Interacts with SLC51A. The Ost-alpha/Ost-beta complex is a heterodimer composed of alpha (SLC51A) and beta (SLC51B) subunit; induces the transport of SLC51A from the endoplasmic reticulum to the plasma membrane.

The protein resides in the cell membrane. The catalysed reaction is taurocholate(out) = taurocholate(in). It catalyses the reaction estrone 3-sulfate(out) = estrone 3-sulfate(in). It carries out the reaction dehydroepiandrosterone 3-sulfate(out) = dehydroepiandrosterone 3-sulfate(in). The enzyme catalyses tauroursodeoxycholate(out) = tauroursodeoxycholate(in). The catalysed reaction is glycoursodeoxycholate(out) = glycoursodeoxycholate(in). It catalyses the reaction glycocholate(out) = glycocholate(in). It carries out the reaction taurochenodeoxycholate(out) = taurochenodeoxycholate(in). The enzyme catalyses glycochenodeoxycholate(out) = glycochenodeoxycholate(in). The catalysed reaction is taurodeoxycholate(out) = taurodeoxycholate(in). It catalyses the reaction glycodeoxycholate(out) = glycodeoxycholate(in). It carries out the reaction prostaglandin E2(out) = prostaglandin E2(in). Essential component of the Ost-alpha/Ost-beta complex, a heterodimer that acts as the intestinal basolateral transporter responsible for bile acid export from enterocytes into portal blood. The Ost-alpha/Ost-beta complex efficiently transports the major species of bile acids (taurocholate). Taurine conjugates are transported more efficiently across the basolateral membrane than glycine-conjugated bile acids. Can also transport steroids such as estrone 3-sulfate and dehydroepiandrosterone 3-sulfate, therefore playing a role in the enterohepatic circulation of sterols. Able to transport eicosanoids such as prostaglandin E2. Modulates SLC51A glycosylation, membrane trafficking and stability activities. This Bos taurus (Bovine) protein is Organic solute transporter subunit beta (SLC51B).